We begin with the raw amino-acid sequence, 247 residues long: Ribonuclease PH (247 aa).

Phosphate-binding positions include Arg87 and 125-127 (GTR).

The protein belongs to the RNase PH family. As to quaternary structure, homohexameric ring arranged as a trimer of dimers.

The enzyme catalyses tRNA(n+1) + phosphate = tRNA(n) + a ribonucleoside 5'-diphosphate. Phosphorolytic 3'-5' exoribonuclease that plays an important role in tRNA 3'-end maturation. Removes nucleotide residues following the 3'-CCA terminus of tRNAs; can also add nucleotides to the ends of RNA molecules by using nucleoside diphosphates as substrates, but this may not be physiologically important. Probably plays a role in initiation of 16S rRNA degradation (leading to ribosome degradation) during starvation. The polypeptide is Ribonuclease PH (Frankia casuarinae (strain DSM 45818 / CECT 9043 / HFP020203 / CcI3)).